Here is a 939-residue protein sequence, read N- to C-terminus: Vacuolar membrane protease (939 aa).

Residues 1–11 (MGFNSIFKFRK) lie on the Cytoplasmic side of the membrane. A helical membrane pass occupies residues 12–32 (TSLSLLLFAVYFIIGILYFID). At 33 to 356 (KTRYKHSLPI…TFVAIPSTKL (324 aa)) the chain is on the vacuolar side. 3 N-linked (GlcNAc...) asparagine glycosylation sites follow: asparagine 59, asparagine 88, and asparagine 114. Residues histidine 149 and aspartate 161 each coordinate Zn(2+). The active-site Proton acceptor is glutamate 193. Positions 194, 219, and 293 each coordinate Zn(2+). Residue asparagine 326 is glycosylated (N-linked (GlcNAc...) asparagine). The chain crosses the membrane as a helical span at residues 357–377 (FWINIALLIIMPIISIFLFSI). Over 378 to 388 (VKKYNNEIIDS) the chain is Cytoplasmic. A helical membrane pass occupies residues 389–409 (GNIWWRLPISAMSSGTIIIFT). Over 410-424 (TKLIMKWNPYILSRN) the chain is Vacuolar. A helical membrane pass occupies residues 425-445 (FLLPLIGLTFEFIILNSYILT). Topologically, residues 446–453 (MFENLSSS) are cytoplasmic. A helical transmembrane segment spans residues 454-474 (FDFKTIAINEISFLFWIVLAY). Residues 475-491 (QTWKLYDNNYQNTGIYP) are Vacuolar-facing. The chain crosses the membrane as a helical span at residues 492–512 (FTICYIVMATAGNIGYLFLIF). At 513–588 (KNIEIVEDEE…NQRTILKESK (76 aa)) the chain is on the cytoplasmic side. Residues 540–552 (YRDEINGRDDSSR) are compositionally biased toward basic and acidic residues. The segment at 540–561 (YRDEINGRDDSSRDSNSASIPT) is disordered. The chain crosses the membrane as a helical span at residues 589–609 (LVYNYDWIIEFLLVVPFSTFL). The Vacuolar segment spans residues 610–636 (LYNSLELIMDAVNQTIQETGDLYKVYK). Asparagine 622 is a glycosylation site (N-linked (GlcNAc...) asparagine). Residues 637–657 (ILAIGSILISIPTLPFAYKIG) traverse the membrane as a helical segment. Residues 658 to 663 (CQLGKT) are Cytoplasmic-facing. A helical membrane pass occupies residues 664–684 (LTFISIGCLLISMALAPFTEM). Residues 685-939 (NPIKFRFMQV…LVKLTEAMVL (255 aa)) lie on the Vacuolar side of the membrane. Asparagine 810 and asparagine 820 each carry an N-linked (GlcNAc...) asparagine glycan.

The protein belongs to the peptidase M28 family. Zn(2+) serves as cofactor.

The protein resides in the vacuole membrane. In terms of biological role, may be involved in vacuolar sorting and osmoregulation. In Vanderwaltozyma polyspora (strain ATCC 22028 / DSM 70294 / BCRC 21397 / CBS 2163 / NBRC 10782 / NRRL Y-8283 / UCD 57-17) (Kluyveromyces polysporus), this protein is Vacuolar membrane protease.